Here is a 300-residue protein sequence, read N- to C-terminus: Formate dehydrogenase-O iron-sulfur subunit (300 aa).

Topologically, residues 1–260 are cytoplasmic; sequence MAYQSQDIIR…KFWKGIWKPL (260 aa). 4Fe-4S ferredoxin-type domains are found at residues 30–60, 91–123, 124–153, and 158–189; these read VAKL…DTVG, LEWL…QYAN, GIVD…LNPE, and YKCT…FGTK. Positions 39, 42, 45, 49, 100, 103, 108, 112, 133, 136, 139, 143, 160, 163, 175, and 179 each coordinate [4Fe-4S] cluster. Residues 261-279 form a helical membrane-spanning segment; it reads AAVGFAATFAASIFHYVGV. Residues 280 to 300 lie on the Periplasmic side of the membrane; that stretch reads GPNRADEEENNLHEEKDEERK.

In terms of assembly, formate dehydrogenase is a membrane-bound complex, formed by subunits alpha, beta and gamma. The cofactor is [4Fe-4S] cluster.

The protein resides in the cell membrane. Allows to use formate as major electron donor during aerobic respiration. The beta chain is an electron transfer unit containing 4 cysteine clusters involved in the formation of iron-sulfur centers. Electrons are transferred from the gamma chain to the molybdenum cofactor of the alpha subunit. The polypeptide is Formate dehydrogenase-O iron-sulfur subunit (fdoH) (Escherichia coli (strain K12)).